Here is a 169-residue protein sequence, read N- to C-terminus: 6,7-dimethyl-8-ribityllumazine synthase (169 aa).

Residues Phe-24, 58-60 (ALE), and 82-84 (AVI) each bind 5-amino-6-(D-ribitylamino)uracil. 87–88 (ET) provides a ligand contact to (2S)-2-hydroxy-3-oxobutyl phosphate. His-90 (proton donor) is an active-site residue. Asn-115 is a binding site for 5-amino-6-(D-ribitylamino)uracil. Arg-129 serves as a coordination point for (2S)-2-hydroxy-3-oxobutyl phosphate.

Belongs to the DMRL synthase family.

The enzyme catalyses (2S)-2-hydroxy-3-oxobutyl phosphate + 5-amino-6-(D-ribitylamino)uracil = 6,7-dimethyl-8-(1-D-ribityl)lumazine + phosphate + 2 H2O + H(+). It functions in the pathway cofactor biosynthesis; riboflavin biosynthesis; riboflavin from 2-hydroxy-3-oxobutyl phosphate and 5-amino-6-(D-ribitylamino)uracil: step 1/2. Catalyzes the formation of 6,7-dimethyl-8-ribityllumazine by condensation of 5-amino-6-(D-ribitylamino)uracil with 3,4-dihydroxy-2-butanone 4-phosphate. This is the penultimate step in the biosynthesis of riboflavin. The protein is 6,7-dimethyl-8-ribityllumazine synthase of Burkholderia vietnamiensis (strain G4 / LMG 22486) (Burkholderia cepacia (strain R1808)).